Reading from the N-terminus, the 83-residue chain is ATP synthase subunit 9, mitochondrial (83 aa).

The next 2 helical transmembrane spans lie at 8–28 and 45–72; these read IGAGAATIASAGAAIGIGNVL and SFGYAILGFALTEAIASFAPMMAFLISS.

It belongs to the ATPase C chain family. F-type ATPases have 2 components, CF(1) - the catalytic core - and CF(0) - the membrane proton channel. CF(1) has five subunits: alpha(3), beta(3), gamma(1), delta(1), epsilon(1). CF(0) has three main subunits: a, b and c.

The protein resides in the mitochondrion membrane. This protein is one of the chains of the nonenzymatic membrane component (F0) of mitochondrial ATPase. This chain is ATP synthase subunit 9, mitochondrial (ATP9), found in Helianthus annuus (Common sunflower).